The primary structure comprises 299 residues: Very long chain fatty acid elongase 5 (299 aa).

N-acetylmethionine is present on Met1. The next 7 membrane-spanning stretches (helical) occupy residues 26-46 (WFLL…LLIV), 64-84 (ILVV…CELV), 112-132 (VLWW…FFIL), 150-170 (MLNI…YFGA), 172-192 (LNSF…VLSM), 205-225 (GQLL…IWPC), and 226-246 (TFPL…IALF). Residues 262–299 (RKDHLKDHQNGSKAAVNGHTNSFSPLENNVKPRKLRKD) are disordered. Polar residues predominate over residues 279–288 (GHTNSFSPLE). Residue Ser285 is modified to Phosphoserine.

Belongs to the ELO family. ELOVL5 subfamily. As to quaternary structure, interacts with TECR.

The protein resides in the endoplasmic reticulum membrane. It localises to the cell projection. It is found in the dendrite. It carries out the reaction a very-long-chain acyl-CoA + malonyl-CoA + H(+) = a very-long-chain 3-oxoacyl-CoA + CO2 + CoA. It catalyses the reaction (6Z,9Z,12Z)-octadecatrienoyl-CoA + malonyl-CoA + H(+) = (8Z,11Z,14Z)-3-oxoeicosatrienoyl-CoA + CO2 + CoA. The enzyme catalyses (9Z,12Z,15Z)-octadecatrienoyl-CoA + malonyl-CoA + H(+) = (11Z,14Z,17Z)-3-oxoeicosatrienoyl-CoA + CO2 + CoA. The catalysed reaction is (9Z)-hexadecenoyl-CoA + malonyl-CoA + H(+) = 3-oxo-(11Z)-octadecenoyl-CoA + CO2 + CoA. It carries out the reaction (9Z)-octadecenoyl-CoA + malonyl-CoA + H(+) = 3-oxo-(11Z)-eicosenoyl-CoA + CO2 + CoA. It catalyses the reaction (11Z)-octadecenoyl-CoA + malonyl-CoA + H(+) = 3-oxo-(13Z)-eicosenoyl-CoA + CO2 + CoA. The enzyme catalyses (9Z,12Z)-octadecadienoyl-CoA + malonyl-CoA + H(+) = (11Z,14Z)-3-oxoicosa-11,14-dienoyl-CoA + CO2 + CoA. The catalysed reaction is (6Z,9Z,12Z,15Z)-octadecatetraenoyl-CoA + malonyl-CoA + H(+) = (8Z,11Z,14Z,17Z)-3-oxoicosatetraenoyl-CoA + CO2 + CoA. It carries out the reaction (5Z,8Z,11Z,14Z)-eicosatetraenoyl-CoA + malonyl-CoA + H(+) = (7Z,10Z,13Z,16Z)-3-oxodocosatetraenoyl-CoA + CO2 + CoA. It catalyses the reaction (5Z,8Z,11Z,14Z,17Z)-eicosapentaenoyl-CoA + malonyl-CoA + H(+) = 3-oxo-(7Z,10Z,13Z,16Z,19Z)-docosapentaenoyl-CoA + CO2 + CoA. The protein operates within lipid metabolism; polyunsaturated fatty acid biosynthesis. In terms of biological role, catalyzes the first and rate-limiting reaction of the four reactions that constitute the long-chain fatty acids elongation cycle. This endoplasmic reticulum-bound enzymatic process allows the addition of 2 carbons to the chain of long- and very long-chain fatty acids (VLCFAs) per cycle. Condensing enzyme that acts specifically toward polyunsaturated acyl-CoA with the higher activity toward C18:3(n-6) acyl-CoA. May participate in the production of monounsaturated and of polyunsaturated VLCFAs of different chain lengths that are involved in multiple biological processes as precursors of membrane lipids and lipid mediators. In conditions where the essential linoleic and alpha linoleic fatty acids are lacking it is also involved in the synthesis of Mead acid from oleic acid. This chain is Very long chain fatty acid elongase 5, found in Pongo abelii (Sumatran orangutan).